A 235-amino-acid polypeptide reads, in one-letter code: Myc target protein 1 (235 aa).

The Bipartite nuclear localization signal signature appears at 95 to 113; the sequence is RRRRASAPISQWSSSRRSR. Residues serine 135, serine 138, serine 141, and serine 149 each carry the phosphoserine modification.

This sequence belongs to the MYCT1 family. Down-regulated in gastric cancer tissues.

Its subcellular location is the nucleus. Functionally, may regulate certain MYC target genes, MYC seems to be a direct upstream transcriptional activator. Does not seem to significantly affect growth cell capacity. Overexpression seems to mediate many of the known phenotypic features associated with MYC, including promotion of apoptosis, alteration of morphology, enhancement of anchorage-independent growth, tumorigenic conversion, promotion of genomic instability, and inhibition of hematopoietic differentiation. This is Myc target protein 1 (MYCT1) from Homo sapiens (Human).